A 238-amino-acid polypeptide reads, in one-letter code: Ribitol-5-phosphate cytidylyltransferase 2 (238 aa).

CTP is bound by residues 7 to 10 and 81 to 87; these read LAGG and GTDRNET.

It belongs to the IspD/TarI cytidylyltransferase family. TarI subfamily.

The enzyme catalyses D-ribitol 5-phosphate + CTP + H(+) = CDP-L-ribitol + diphosphate. The protein operates within cell wall biogenesis; poly(ribitol phosphate) teichoic acid biosynthesis. Its function is as follows. Catalyzes the transfer of the cytidylyl group of CTP to D-ribitol 5-phosphate. This chain is Ribitol-5-phosphate cytidylyltransferase 2, found in Staphylococcus aureus (strain MRSA252).